The primary structure comprises 730 residues: Meiotically up-regulated gene 70 protein (730 aa).

Residues 1–27 (MTVGTLSVVSSTASDTASHVSDTRKRQ) form a disordered region. Low complexity predominate over residues 7–20 (SVVSSTASDTASHV). CBS domains lie at 69–127 (ALDP…LNAR), 135–200 (MSTS…RIAR), 263–319 (SSEE…GLDP), and 328–385 (MTPH…PEEE). Helical transmembrane passes span 290 to 310 (AVLVMDNGAVSGVFTAHDVVL) and 358 to 378 (VVDESDAIIGMLSLFHLATAI). Residues 420–517 (ENYDVNPPLP…ENGSNSFAAS (98 aa)) are disordered. Composition is skewed to polar residues over residues 458–470 (AWQNENLSSNNKP) and 480–515 (YNFSNNPPTAMSEQSFHPSVSQKPMDTPENGSNSFA). The region spanning 572 to 649 (PSQFTIKYRS…ARRRGLPRLE (78 aa)) is the PB1 domain. Residues 706–726 (PIYIGIVSSSIVILAVSMWYL) form a helical membrane-spanning segment.

The protein localises to the cytoplasm. It localises to the nucleus membrane. Has a role in meiosis. This Schizosaccharomyces pombe (strain 972 / ATCC 24843) (Fission yeast) protein is Meiotically up-regulated gene 70 protein (mug70).